The sequence spans 1169 residues: Protein qua-1 (1169 aa).

A signal peptide spans 1–22; that stretch reads MRRLSAILPILLLSNFWPTVES. Disordered stretches follow at residues 261–338 and 368–933; these read GATG…AGTN and AGGV…RTSS. Positions 278–292 are enriched in low complexity; that stretch reads ESNGNNNNSFEGGRS. Positions 312–337 are enriched in gly residues; sequence GAGGKGGAGADGAAGSGAGAGAGAGT. 2 stretches are compositionally biased toward acidic residues: residues 426–437 and 453–464; these read DEEDEEDNGDED and DDGDGDEDDDGT. Residues 511-523 are compositionally biased toward basic and acidic residues; sequence SPDDNDLLEKDEN. 5 stretches are compositionally biased toward gly residues: residues 526-536, 545-572, 605-634, 656-700, and 727-752; these read NGKGGAGNGNG, KGNGTGDGDGDGNGNGNGLTGDGNGTGD, DGNGNGTGDGNGDGNDNGNGSKGLGTGSGD, GSNG…GGTG, and NAEGNGKGNGNDGKGSGSGDGSGAGG. The span at 753-774 shows a compositional bias: basic and acidic residues; it reads KGDKSDSESGNEADGKDGKKNE. The span at 775–791 shows a compositional bias: gly residues; it reads GAGGEAAAGSGGANKGG. A compositionally biased stretch (acidic residues) spans 793-803; that stretch reads DGDDDDVDVTD. Polar residues predominate over residues 840–855; sequence GTVQTGAKHNAESSAS. The span at 889 to 906 shows a compositional bias: low complexity; sequence SGTSESVTNGSGATESGS. Residues 907-923 show a composition bias toward gly residues; sequence TGSGTTGTGTSGTGSSG. The span at 924–933 shows a compositional bias: low complexity; that stretch reads TGASAARTSS.

As to expression, transiently expressed in head cells.

Its subcellular location is the cytoplasmic vesicle. It localises to the secreted. The protein localises to the extracellular space. The protein resides in the extracellular matrix. Required for cuticle shedding and normal alae morphology and localization, and subsequently larval development. The protein is Protein qua-1 of Caenorhabditis elegans.